Here is a 493-residue protein sequence, read N- to C-terminus: V-type proton ATPase subunit B (493 aa).

The protein belongs to the ATPase alpha/beta chains family. V-ATPase is a heteromultimeric enzyme composed of a peripheral catalytic V1 complex (main components: subunits A, B, C, D, E, and F) attached to an integral membrane V0 proton pore complex (main component: the proteolipid protein).

The protein resides in the cytoplasmic vesicle membrane. The protein localises to the endosome membrane. It is found in the contractile vacuole membrane. In terms of biological role, vacuolar ATPase is responsible for acidifying a variety of intracellular compartments in eukaryotic cells. The B subunit is non-catalytic but combines with other subunits to form the catalytic complex. V-ATPase is responsible for energizing electrophoretic K(+)/2H(+) antiport by generating a transmembrane voltage of more than 200 mV. In Dictyostelium discoideum (Social amoeba), this protein is V-type proton ATPase subunit B (vatB).